Reading from the N-terminus, the 122-residue chain is Large ribosomal subunit protein uL14 (122 aa).

It belongs to the universal ribosomal protein uL14 family. As to quaternary structure, part of the 50S ribosomal subunit. Forms a cluster with proteins L3 and L19. In the 70S ribosome, L14 and L19 interact and together make contacts with the 16S rRNA in bridges B5 and B8.

Functionally, binds to 23S rRNA. Forms part of two intersubunit bridges in the 70S ribosome. The protein is Large ribosomal subunit protein uL14 of Chlorobium luteolum (strain DSM 273 / BCRC 81028 / 2530) (Pelodictyon luteolum).